We begin with the raw amino-acid sequence, 87 residues long: U3-theraphotoxin-Hhn1a 7 (87 aa).

Residues 1-24 (MVNMKASMFLTFAGLVLLFVVSYA) form the signal peptide. The propeptide occupies 25–52 (SESEEKEFPKEMLSSIFAVDNDFKQEER). 3 disulfides stabilise this stretch: Cys54-Cys67, Cys61-Cys72, and Cys66-Cys79.

Belongs to the neurotoxin 10 (Hwtx-1) family. 51 (Hntx-8) subfamily. Hntx-8 sub-subfamily. Expressed by the venom gland.

The protein resides in the secreted. Its function is as follows. Ion channel inhibitor. The polypeptide is U3-theraphotoxin-Hhn1a 7 (Cyriopagopus hainanus (Chinese bird spider)).